A 91-amino-acid chain; its full sequence is Large ribosomal subunit protein bL31B (91 aa).

Belongs to the bacterial ribosomal protein bL31 family. Type B subfamily. As to quaternary structure, part of the 50S ribosomal subunit.

The chain is Large ribosomal subunit protein bL31B from Neisseria gonorrhoeae (strain NCCP11945).